We begin with the raw amino-acid sequence, 380 residues long: Cobalt-precorrin-5B C(1)-methyltransferase (380 aa).

The protein belongs to the CbiD family.

It carries out the reaction Co-precorrin-5B + S-adenosyl-L-methionine = Co-precorrin-6A + S-adenosyl-L-homocysteine. It participates in cofactor biosynthesis; adenosylcobalamin biosynthesis; cob(II)yrinate a,c-diamide from sirohydrochlorin (anaerobic route): step 6/10. Functionally, catalyzes the methylation of C-1 in cobalt-precorrin-5B to form cobalt-precorrin-6A. This chain is Cobalt-precorrin-5B C(1)-methyltransferase, found in Methanosphaera stadtmanae (strain ATCC 43021 / DSM 3091 / JCM 11832 / MCB-3).